We begin with the raw amino-acid sequence, 257 residues long: MNFPDSSLFTPNFAYENDLDFSSLITPSTRVSFQEPKPCNPVIHSAGIENDGRQNCETTMTLSEIMKGDDEPKNKRAKHKELERQRRQENTSLFKILRYLLPSQYIKGKRSSADHVLEAVNYIKDLQKKIKEVSEKRDRIKRSITHPSSRGEFSIRSLASSTCSCVGDTNIAVVVRPCLIGLEIVVSCCNRHESCLSSVLQLLAQEQCFNIVSCISTRLHQGFIHTIASEVEEGIEVYFSELQEKIIKIGTSRVTTR.

In terms of domain architecture, bHLH spans 74–126 (NKRAKHKELERQRRQENTSLFKILRYLLPSQYIKGKRSSADHVLEAVNYIKDL).

Homodimer. In terms of tissue distribution, expressed in roots, leaves, stems, and flowers.

Its subcellular location is the nucleus. This is Transcription factor bHLH55 (BHLH55) from Arabidopsis thaliana (Mouse-ear cress).